Here is a 274-residue protein sequence, read N- to C-terminus: Kit ligand (274 aa).

The first 25 residues, 1 to 25 (MKKTQTWIVTCIYLQLLLFNPLVKT), serve as a signal peptide directing secretion. Topologically, residues 26–215 (KGLCRNRVTD…TNPIEDSSIQ (190 aa)) are extracellular. 2 cysteine pairs are disulfide-bonded: Cys29–Cys114 and Cys68–Cys164. Residues Asn90, Asn97, Asn145, and Asn196 are each glycosylated (N-linked (GlcNAc...) asparagine). A helical membrane pass occupies residues 216–238 (WAVMALPACFSLVIGFAFGAFYW). Residues 239–274 (KKKQPNLTRTVENIQINEEDNEISMLQEKEREFQEV) lie on the Cytoplasmic side of the membrane.

The protein belongs to the SCF family. In terms of assembly, homodimer, non-covalently linked. Post-translationally, a soluble form is produced by proteolytic processing of isoform 1 in the extracellular domain.

The protein resides in the cell membrane. Its subcellular location is the secreted. It is found in the cytoplasm. It localises to the cytoskeleton. The protein localises to the cell projection. The protein resides in the lamellipodium. Its subcellular location is the filopodium. Its function is as follows. Stimulates the proliferation of mast cells. Able to augment the proliferation of both myeloid and lymphoid hematopoietic progenitors in bone marrow culture. Also mediates cell-cell adhesion. Acts synergistically with other cytokines, probably interleukins. This Felis catus (Cat) protein is Kit ligand (KITLG).